The primary structure comprises 832 residues: Pre-mRNA-splicing factor SYF1 (832 aa).

HAT repeat units follow at residues histidine 18–glutamine 50, glycine 52–lysine 84, alanine 96–lysine 128, proline 130–serine 164, glycine 196–glutamate 235, glutamate 245–arginine 278, glycine 280–serine 315, aspartate 383–arginine 421, glycine 423–arginine 459, alanine 476–leucine 508, glycine 513–glutamate 545, lysine 547–aspartate 581, isoleucine 584–glutamate 618, phenylalanine 656–arginine 690, and glycine 692–glutamine 726.

Belongs to the crooked-neck family. As to quaternary structure, associated with the spliceosome.

The protein localises to the nucleus. Its function is as follows. Involved in pre-mRNA splicing and cell cycle progression. This Pyricularia oryzae (strain 70-15 / ATCC MYA-4617 / FGSC 8958) (Rice blast fungus) protein is Pre-mRNA-splicing factor SYF1 (SYF1).